The sequence spans 538 residues: MVFAMLVVCWSIFLGLWMLVSRLKQSRDKICPPKGPPRLPWIGNLHQFPLKLLHLRLTEWSRTYGGFYTLKLGPVTAAVITDRQIAKEAFDRNSAISSTRHTNYATEFVTDGTHLLTMKYGALWREERKILQQTLKGSVCDNDHMRLIDAEQTQLMRDLLVNPSDYSAYIKRASTSIITSLVFGIRTPSCATLHLQELDAINDDWLQLLVIGGALSEDVFPVLKYIPSAFLGTFTKRLKGIRRRMRRLYGTMLNQTITRQRESPAPPARSMIDAVLNQREHFNLTDRQIEVLAGVTLEGGFDTTTSMLLVFVQAMTLHPECQERAYVEINALCGRHRIPQWSDRNQLPYVNMLLKETMRWRPVTTLSPPHVLEKDTTIRGTFLPQGSMLILNTWGLHQDPNVFIDPDRFDPMRYEGYTKLAADYANAPDAATRDHYTYGIGRRICPGIHLADRSMFLAIAKLIWGFRFEPQRDEQGNSIPIDSNPVTGYTVDKVQISPKPFACAVIPRDKEGEKTILREFGVASEVFADYNLDENASL.

Residues V2–S21 form a helical membrane-spanning segment. Residue C445 coordinates heme.

This sequence belongs to the cytochrome P450 family. The cofactor is heme.

The protein localises to the membrane. It functions in the pathway secondary metabolite biosynthesis; terpenoid biosynthesis. It participates in mycotoxin biosynthesis. In terms of biological role, cytochrome P450 monooxygenase; part of the gene cluster that mediates the biosynthesis of the neurotoxin verrucosidin, a methylated alpha-pyrone polyketide that inhibits oxidative phosphorylation in mitochondria and thereby causes neurological diseases. The carbon backbone of verrucosidin is synthesized by the HR-PKS verA, and further modified by the other verrucodidin cluster enzymes. The chain is Cytochrome P450 monooxygenase verH from Penicillium polonicum.